A 72-amino-acid chain; its full sequence is Translation initiation factor IF-1 (72 aa).

An S1-like domain is found at 1–72 (MAKEDTIQMQ…TRARIVFRAR (72 aa)).

Belongs to the IF-1 family. As to quaternary structure, component of the 30S ribosomal translation pre-initiation complex which assembles on the 30S ribosome in the order IF-2 and IF-3, IF-1 and N-formylmethionyl-tRNA(fMet); mRNA recruitment can occur at any time during PIC assembly.

It is found in the cytoplasm. Its function is as follows. One of the essential components for the initiation of protein synthesis. Stabilizes the binding of IF-2 and IF-3 on the 30S subunit to which N-formylmethionyl-tRNA(fMet) subsequently binds. Helps modulate mRNA selection, yielding the 30S pre-initiation complex (PIC). Upon addition of the 50S ribosomal subunit IF-1, IF-2 and IF-3 are released leaving the mature 70S translation initiation complex. The polypeptide is Translation initiation factor IF-1 (Neisseria gonorrhoeae (strain ATCC 700825 / FA 1090)).